The sequence spans 117 residues: V-type sodium ATPase subunit F (117 aa).

The segment at 1–20 is disordered; sequence MARILTRIKEAEENNQKKEE. Over residues 7–20 the composition is skewed to basic and acidic residues; that stretch reads RIKEAEENNQKKEE.

This sequence belongs to the V-ATPase G subunit family.

Involved in ATP-driven sodium extrusion. This chain is V-type sodium ATPase subunit F (ntpF), found in Enterococcus hirae (strain ATCC 9790 / DSM 20160 / JCM 8729 / LMG 6399 / NBRC 3181 / NCIMB 6459 / NCDO 1258 / NCTC 12367 / WDCM 00089 / R).